The primary structure comprises 77 residues: Conotoxin ArMKLT2-0322 (77 aa).

An N-terminal signal peptide occupies residues 1–22 (MKLTCVLIIAVLFLIVCQLNTA). Residues 23-47 (DDSRDKQEYRAVRLRDAIRNSRGSR) constitute a propeptide that is removed on maturation. Cystine bridges form between cysteine 49/cysteine 62, cysteine 56/cysteine 67, and cysteine 61/cysteine 74.

This sequence belongs to the conotoxin O1 superfamily. Expressed by the venom duct.

It localises to the secreted. This chain is Conotoxin ArMKLT2-0322, found in Conus arenatus (Sand-dusted cone).